We begin with the raw amino-acid sequence, 319 residues long: ATP-dependent 6-phosphofructokinase (319 aa).

G11 contacts ATP. Residue 21–25 (RAVVR) participates in ADP binding. ATP is bound by residues 72–73 (RY) and 102–105 (GDGS). Mg(2+) is bound at residue D103. Residue 125 to 127 (TID) participates in substrate binding. The active-site Proton acceptor is D127. ADP is bound at residue R154. Residues R162 and 169 to 171 (MGR) each bind substrate. ADP is bound by residues 185 to 187 (GAE), R211, and 213 to 215 (KKH). Substrate is bound by residues E222, R243, and 249–252 (HVQR).

The protein belongs to the phosphofructokinase type A (PFKA) family. ATP-dependent PFK group I subfamily. Prokaryotic clade 'B1' sub-subfamily. Homotetramer. It depends on Mg(2+) as a cofactor.

The protein localises to the cytoplasm. It carries out the reaction beta-D-fructose 6-phosphate + ATP = beta-D-fructose 1,6-bisphosphate + ADP + H(+). Its pathway is carbohydrate degradation; glycolysis; D-glyceraldehyde 3-phosphate and glycerone phosphate from D-glucose: step 3/4. Allosterically activated by ADP and other diphosphonucleosides, and allosterically inhibited by phosphoenolpyruvate. Functionally, catalyzes the phosphorylation of D-fructose 6-phosphate to fructose 1,6-bisphosphate by ATP, the first committing step of glycolysis. The chain is ATP-dependent 6-phosphofructokinase from Listeria welshimeri serovar 6b (strain ATCC 35897 / DSM 20650 / CCUG 15529 / CIP 8149 / NCTC 11857 / SLCC 5334 / V8).